Here is a 143-residue protein sequence, read N- to C-terminus: Putative nickel-responsive regulator (143 aa).

Ni(2+) is bound by residues His82, His97, His99, and Cys105.

Belongs to the transcriptional regulatory CopG/NikR family. The cofactor is Ni(2+).

Transcriptional regulator. The sequence is that of Putative nickel-responsive regulator from Helicobacter hepaticus (strain ATCC 51449 / 3B1).